We begin with the raw amino-acid sequence, 186 residues long: Ribosome-recycling factor (186 aa).

This sequence belongs to the RRF family.

The protein localises to the cytoplasm. In terms of biological role, responsible for the release of ribosomes from messenger RNA at the termination of protein biosynthesis. May increase the efficiency of translation by recycling ribosomes from one round of translation to another. The sequence is that of Ribosome-recycling factor from Rickettsia typhi (strain ATCC VR-144 / Wilmington).